The chain runs to 465 residues: ATP-dependent protease ATPase subunit HslU (465 aa).

Residues valine 19 and 61–66 (GVGKTE) contribute to the ATP site. Residues 153-175 (LFQSDGSDGDDETTEQDSHDEIR) are disordered. Aspartate 279, glutamate 343, and arginine 415 together coordinate ATP.

The protein belongs to the ClpX chaperone family. HslU subfamily. In terms of assembly, a double ring-shaped homohexamer of HslV is capped on each side by a ring-shaped HslU homohexamer. The assembly of the HslU/HslV complex is dependent on binding of ATP.

It is found in the cytoplasm. ATPase subunit of a proteasome-like degradation complex; this subunit has chaperone activity. The binding of ATP and its subsequent hydrolysis by HslU are essential for unfolding of protein substrates subsequently hydrolyzed by HslV. HslU recognizes the N-terminal part of its protein substrates and unfolds these before they are guided to HslV for hydrolysis. In Oceanobacillus iheyensis (strain DSM 14371 / CIP 107618 / JCM 11309 / KCTC 3954 / HTE831), this protein is ATP-dependent protease ATPase subunit HslU.